A 690-amino-acid polypeptide reads, in one-letter code: Protein arginine N-methyltransferase 7 (690 aa).

SAM-dependent MTase PRMT-type domains follow at residues 14 to 357 (QNSW…YSLW) and 366 to 690 (TKSV…QKKL).

The protein belongs to the class I-like SAM-binding methyltransferase superfamily. Protein arginine N-methyltransferase family. PRMT7 subfamily. As to expression, expressed at low level in ovary.

In terms of biological role, essential arginine methyltransferase that can both catalyze the formation of omega-N monomethylarginine (MMA) and symmetrical dimethylarginine (sDMA). Specifically mediates the symmetrical dimethylation of arginine residues in the small nuclear ribonucleoproteins SmD1 and SmD3. The polypeptide is Protein arginine N-methyltransferase 7 (Art7) (Drosophila melanogaster (Fruit fly)).